Reading from the N-terminus, the 459-residue chain is MNRLPSSASALACSAHALNLIEKRTLNHEEMKALNREVIDYFKEHVNPGFLEYRKSVTAGGDYGAVEWQAGSLNTLVDTQGQEFIDCLGGFGIFNVGHRNPVVVSAVQNQLAKQPLHSQELLDPLRAMLAKTLAALAPGKLKYSFFCNSGTESVEAALKLAKAYQSPRGKFTFIATSGAFHGKSLGALSATAKSTFRRPFMPLLPGFRHVPFGNIDAMSMAFSEGKKTGDEIAAVILEPIQGEGGVILPPQGYLTEVRKLCDEFGALMILDEVQTGMGRTGKMFACEHENVQPDILCLAKALGGGVMPIGATIATEEVFSVLFDNPFLHTTTFGGNPLACAAALATINVLLEQNLPAQAEQKGDTLLDGFRQLAREYPNLVHDARGKGMLMAIEFVDNETGYRFASEMFRQRVLVAGTLNNAKTTRIEPPLTLTIELCEQVLKSARNALAAMQVSVEEV.

Residues 150–151 (GT) and glutamine 274 each bind pyridoxal 5'-phosphate. Position 300 is an N6-(pyridoxal phosphate)lysine (lysine 300). Threonine 332 is a pyridoxal 5'-phosphate binding site.

This sequence belongs to the class-III pyridoxal-phosphate-dependent aminotransferase family. Putrescine aminotransferase subfamily. It depends on pyridoxal 5'-phosphate as a cofactor.

It carries out the reaction an alkane-alpha,omega-diamine + 2-oxoglutarate = an omega-aminoaldehyde + L-glutamate. It catalyses the reaction putrescine + 2-oxoglutarate = 1-pyrroline + L-glutamate + H2O. The catalysed reaction is cadaverine + 2-oxoglutarate = 5-aminopentanal + L-glutamate. It functions in the pathway amine and polyamine degradation; putrescine degradation; 4-aminobutanal from putrescine (transaminase route): step 1/1. Its function is as follows. Catalyzes the aminotransferase reaction from putrescine to 2-oxoglutarate, leading to glutamate and 4-aminobutanal, which spontaneously cyclizes to form 1-pyrroline. This is the first step in one of two pathways for putrescine degradation, where putrescine is converted into 4-aminobutanoate (gamma-aminobutyrate or GABA) via 4-aminobutanal. Also functions as a cadaverine transaminase in a a L-lysine degradation pathway to succinate that proceeds via cadaverine, glutarate and L-2-hydroxyglutarate. The chain is Putrescine aminotransferase from Salmonella paratyphi B (strain ATCC BAA-1250 / SPB7).